The primary structure comprises 369 residues: Sesquiterpene cyclase hepA (369 aa).

Mg(2+) contacts are provided by Asp100, Asn248, Ser252, and Asp256. The DDXXD motif motif lies at 100-104; the sequence is DDEID. The short motif at 255 to 262 is the (N,D)D(L,I,V)X(S,T)XXXE motif element; the sequence is NDLLSLRK.

The protein belongs to the terpene synthase family. Mg(2+) serves as cofactor.

Its function is as follows. Sesquiterpene cyclase; part of the gene cluster that mediates the biosynthesis of heptelidic acid (HA), a sesquiterpene lactone that acts as an inhibitor of glyceraldehyde-3-phosphatedehydrogenase (GAPDH) and a growth inhibitor of the salt-tolerant lactic acid bacteria in soy sauce brewing. The sequence is that of Sesquiterpene cyclase hepA from Aspergillus oryzae (strain ATCC 42149 / RIB 40) (Yellow koji mold).